Here is a 259-residue protein sequence, read N- to C-terminus: Aspartate/glutamate leucyltransferase (259 aa).

This sequence belongs to the R-transferase family. Bpt subfamily.

The protein localises to the cytoplasm. It catalyses the reaction N-terminal L-glutamyl-[protein] + L-leucyl-tRNA(Leu) = N-terminal L-leucyl-L-glutamyl-[protein] + tRNA(Leu) + H(+). It carries out the reaction N-terminal L-aspartyl-[protein] + L-leucyl-tRNA(Leu) = N-terminal L-leucyl-L-aspartyl-[protein] + tRNA(Leu) + H(+). In terms of biological role, functions in the N-end rule pathway of protein degradation where it conjugates Leu from its aminoacyl-tRNA to the N-termini of proteins containing an N-terminal aspartate or glutamate. The sequence is that of Aspartate/glutamate leucyltransferase from Rhizobium meliloti (strain 1021) (Ensifer meliloti).